The primary structure comprises 288 residues: ATP synthase gamma chain (288 aa).

This sequence belongs to the ATPase gamma chain family. F-type ATPases have 2 components, CF(1) - the catalytic core - and CF(0) - the membrane proton channel. CF(1) has five subunits: alpha(3), beta(3), gamma(1), delta(1), epsilon(1). CF(0) has three main subunits: a, b and c.

The protein localises to the cell membrane. Functionally, produces ATP from ADP in the presence of a proton gradient across the membrane. The gamma chain is believed to be important in regulating ATPase activity and the flow of protons through the CF(0) complex. The polypeptide is ATP synthase gamma chain (Staphylococcus aureus (strain bovine RF122 / ET3-1)).